The primary structure comprises 509 residues: Aspartyl/glutamyl-tRNA(Asn/Gln) amidotransferase subunit B (509 aa).

It belongs to the GatB/GatE family. GatB subfamily. Heterotrimer of A, B and C subunits.

The catalysed reaction is L-glutamyl-tRNA(Gln) + L-glutamine + ATP + H2O = L-glutaminyl-tRNA(Gln) + L-glutamate + ADP + phosphate + H(+). The enzyme catalyses L-aspartyl-tRNA(Asn) + L-glutamine + ATP + H2O = L-asparaginyl-tRNA(Asn) + L-glutamate + ADP + phosphate + 2 H(+). Its function is as follows. Allows the formation of correctly charged Asn-tRNA(Asn) or Gln-tRNA(Gln) through the transamidation of misacylated Asp-tRNA(Asn) or Glu-tRNA(Gln) in organisms which lack either or both of asparaginyl-tRNA or glutaminyl-tRNA synthetases. The reaction takes place in the presence of glutamine and ATP through an activated phospho-Asp-tRNA(Asn) or phospho-Glu-tRNA(Gln). This chain is Aspartyl/glutamyl-tRNA(Asn/Gln) amidotransferase subunit B, found in Psychrobacter arcticus (strain DSM 17307 / VKM B-2377 / 273-4).